The sequence spans 109 residues: MDMDLNNRLTEDETLEQAYDIFLELAADNLDPADVLLFNLQFEERGGAELFDPAEDWQEHVDFDLNPDFFAEVVIGLTDSEDGEISDVFARILLCREKDHKLCHIIWRE.

It belongs to the putative dsDNA mimic protein family.

Its function is as follows. May act as a double-stranded DNA (dsDNA) mimic. Probably regulates the activity of a dsDNA-binding protein. This Shigella flexneri protein is Putative double-stranded DNA mimic protein YciU.